A 78-amino-acid polypeptide reads, in one-letter code: UPF0349 protein YuzB (78 aa).

The protein belongs to the UPF0349 family.

The polypeptide is UPF0349 protein YuzB (yuzB) (Bacillus subtilis (strain 168)).